We begin with the raw amino-acid sequence, 94 residues long: Protein SpdA (94 aa).

Residues 41-68 (GPILLALVAAGGSVGVVMTLCLLLQTAA) traverse the membrane as a helical segment.

The protein resides in the cell membrane. Involved in plasmid transfer. In Streptomyces lividans, this protein is Protein SpdA (spdA).